An 878-amino-acid chain; its full sequence is Alanine--tRNA ligase (878 aa).

Zn(2+)-binding residues include H566, H570, C668, and H672.

The protein belongs to the class-II aminoacyl-tRNA synthetase family. Zn(2+) is required as a cofactor.

The protein resides in the cytoplasm. The catalysed reaction is tRNA(Ala) + L-alanine + ATP = L-alanyl-tRNA(Ala) + AMP + diphosphate. In terms of biological role, catalyzes the attachment of alanine to tRNA(Ala) in a two-step reaction: alanine is first activated by ATP to form Ala-AMP and then transferred to the acceptor end of tRNA(Ala). Also edits incorrectly charged Ser-tRNA(Ala) and Gly-tRNA(Ala) via its editing domain. The protein is Alanine--tRNA ligase of Bacillus subtilis (strain 168).